Consider the following 399-residue polypeptide: Subtilisin-like protease 1 (399 aa).

The signal sequence occupies residues M1–A19. Residues A20 to H116 constitute a propeptide that is removed on maturation. Positions S34–V115 constitute an Inhibitor I9 domain. The region spanning S126–A399 is the Peptidase S8 domain. Catalysis depends on charge relay system residues D158 and H190. The interval G175–M198 is disordered. N-linked (GlcNAc...) asparagine glycosylation occurs at N251. Polar residues predominate over residues N282 to S294. The disordered stretch occupies residues N282–S312. S345 functions as the Charge relay system in the catalytic mechanism.

This sequence belongs to the peptidase S8 family.

The protein resides in the secreted. Secreted subtilisin-like serine protease with keratinolytic activity that contributes to pathogenicity. The sequence is that of Subtilisin-like protease 1 (SUB1) from Arthroderma benhamiae (Trichophyton mentagrophytes).